A 448-amino-acid polypeptide reads, in one-letter code: Putative F-box/LRR-repeat protein At5g25860 (448 aa).

In terms of domain architecture, F-box spans 11-58 (RDAVNCLPDEILAKILSYLPTKRAVSTSLISKRWRNLFALMIQLFESQ). 5 LRR repeats span residues 82-106 (QESF…SILC), 185-214 (FLHA…FLHD), 215-240 (LRGY…TVHF), 310-341 (TLSL…YFES), and 342-367 (NEKE…VLKG).

This chain is Putative F-box/LRR-repeat protein At5g25860, found in Arabidopsis thaliana (Mouse-ear cress).